Consider the following 226-residue polypeptide: NADH-ubiquinone oxidoreductase 19.3 kDa subunit, mitochondrial (226 aa).

Residues 40–68 (ATGAVAPAGAQHGIARRERREVPLPSQEG) are disordered. [4Fe-4S] cluster is bound by residues Cys-101, Cys-102, Cys-166, and Cys-196.

It belongs to the complex I 20 kDa subunit family. In terms of assembly, complex I is composed of about 40 different subunits. This is a component of the iron-sulfur (IP) fragment of the enzyme. Requires [4Fe-4S] cluster as cofactor.

It localises to the mitochondrion. The catalysed reaction is a ubiquinone + NADH + 5 H(+)(in) = a ubiquinol + NAD(+) + 4 H(+)(out). Core subunit of the mitochondrial membrane respiratory chain NADH dehydrogenase (Complex I) that is believed to belong to the minimal assembly required for catalysis. Complex I functions in the transfer of electrons from NADH to the respiratory chain. The immediate electron acceptor for the enzyme is believed to be ubiquinone. In Neurospora crassa (strain ATCC 24698 / 74-OR23-1A / CBS 708.71 / DSM 1257 / FGSC 987), this protein is NADH-ubiquinone oxidoreductase 19.3 kDa subunit, mitochondrial.